The primary structure comprises 45 residues: Photosystem II reaction center protein K (45 aa).

A propeptide spanning residues 1–8 (MEAALLLA) is cleaved from the precursor. A helical membrane pass occupies residues 24-44 (LPLIPLFFLLLAFVWQAAVGF).

Belongs to the PsbK family. PSII is composed of 1 copy each of membrane proteins PsbA, PsbB, PsbC, PsbD, PsbE, PsbF, PsbH, PsbI, PsbJ, PsbK, PsbL, PsbM, PsbT, PsbX, PsbY, PsbZ, Psb30/Ycf12, peripheral proteins PsbO, CyanoQ (PsbQ), PsbU, PsbV and a large number of cofactors. It forms dimeric complexes.

The protein resides in the cellular thylakoid membrane. Its function is as follows. One of the components of the core complex of photosystem II (PSII). PSII is a light-driven water:plastoquinone oxidoreductase that uses light energy to abstract electrons from H(2)O, generating O(2) and a proton gradient subsequently used for ATP formation. It consists of a core antenna complex that captures photons, and an electron transfer chain that converts photonic excitation into a charge separation. In Picosynechococcus sp. (strain ATCC 27264 / PCC 7002 / PR-6) (Agmenellum quadruplicatum), this protein is Photosystem II reaction center protein K.